Reading from the N-terminus, the 399-residue chain is UDP-N-acetylglucosamine--N-acetylmuramyl-(pentapeptide) pyrophosphoryl-undecaprenol N-acetylglucosamine transferase (399 aa).

A compositionally biased stretch (basic residues) spans 1–21; sequence MTSRFGHSHHPRRGRSARARA. The interval 1 to 30 is disordered; that stretch reads MTSRFGHSHHPRRGRSARARAGRREGVQSN. Residues 58 to 60, asparagine 170, arginine 206, serine 234, isoleucine 288, and glutamine 333 contribute to the UDP-N-acetyl-alpha-D-glucosamine site; that span reads TGG.

It belongs to the glycosyltransferase 28 family. MurG subfamily.

It localises to the cell inner membrane. It carries out the reaction di-trans,octa-cis-undecaprenyl diphospho-N-acetyl-alpha-D-muramoyl-L-alanyl-D-glutamyl-meso-2,6-diaminopimeloyl-D-alanyl-D-alanine + UDP-N-acetyl-alpha-D-glucosamine = di-trans,octa-cis-undecaprenyl diphospho-[N-acetyl-alpha-D-glucosaminyl-(1-&gt;4)]-N-acetyl-alpha-D-muramoyl-L-alanyl-D-glutamyl-meso-2,6-diaminopimeloyl-D-alanyl-D-alanine + UDP + H(+). It functions in the pathway cell wall biogenesis; peptidoglycan biosynthesis. Functionally, cell wall formation. Catalyzes the transfer of a GlcNAc subunit on undecaprenyl-pyrophosphoryl-MurNAc-pentapeptide (lipid intermediate I) to form undecaprenyl-pyrophosphoryl-MurNAc-(pentapeptide)GlcNAc (lipid intermediate II). The sequence is that of UDP-N-acetylglucosamine--N-acetylmuramyl-(pentapeptide) pyrophosphoryl-undecaprenol N-acetylglucosamine transferase from Acidovorax ebreus (strain TPSY) (Diaphorobacter sp. (strain TPSY)).